The sequence spans 372 residues: Gibberellin 20 oxidase 1 (372 aa).

Residues 209 to 309 enclose the Fe2OG dioxygenase domain; it reads RNDSIMRLNY…RRSLAFFLCP (101 aa). Residues histidine 234, aspartate 236, and histidine 290 each coordinate Fe cation. Arginine 300 is an active-site residue.

It belongs to the iron/ascorbate-dependent oxidoreductase family. GA20OX subfamily. It depends on Fe(2+) as a cofactor. The cofactor is L-ascorbate. In terms of tissue distribution, preferentially expressed in reproductive organs. Expressed in the epithelium of embryos and the tapetum of anthers. Expressed at low levels in the shoot apical meristem.

It carries out the reaction gibberellin A12 + 2 2-oxoglutarate + 3 O2 + H(+) = gibberellin A9 + 2 succinate + 3 CO2 + 2 H2O. The enzyme catalyses gibberellin A53 + 2 2-oxoglutarate + 3 O2 + H(+) = gibberellin A20 + 2 succinate + 3 CO2 + 2 H2O. Its function is as follows. Key oxidase enzyme in the biosynthesis of gibberellin. Catalyzes the conversion of GA12 and GA53 to GA9 and GA20 respectively, via a three-step oxidation at C-20 of the GA skeleton. The polypeptide is Gibberellin 20 oxidase 1 (Oryza sativa subsp. japonica (Rice)).